Consider the following 334-residue polypeptide: Galactosylgalactosylxylosylprotein 3-beta-glucuronosyltransferase 1 (334 aa).

The Cytoplasmic segment spans residues 1–6; that stretch reads MPKRRD. The essential for transport from endoplasmic reticulum to Golgi apparatus and interaction with SAR1A stretch occupies residues 3–5; sequence KRR. A helical; Signal-anchor for type II membrane protein transmembrane segment spans residues 7–27; sequence ILAIVLIVLPWTLLITVWHQS. The Lumenal segment spans residues 28 to 334; the sequence is TLAPLLAVHK…KGFTDPSVEI (307 aa). The interval 37-56 is disordered; the sequence is KDEGSDPRRETPPGADPREY. 91–93 lines the UDP-alpha-D-glucuronate pocket; sequence PTY. Phosphothreonine occurs at positions 103 and 108. Position 122 (D122) interacts with UDP-alpha-D-glucuronate. N-linked (GlcNAc...) asparagine glycosylation is present at N140. UDP-alpha-D-glucuronate contacts are provided by R165 and R170. Residue N184 is glycosylated (N-linked (GlcNAc...) asparagine). 195–197 provides a ligand contact to UDP-alpha-D-glucuronate; that stretch reads DDD. D197 is a binding site for Mn(2+). Positions 245-254 are interaction with galactose moiety of substrate glycoprotein; that stretch reads FDPHRPFAID. Catalysis depends on E284, which acts as the Proton donor/acceptor. N-linked (GlcNAc...) asparagine glycosylation is present at N303. Residue 311 to 313 coordinates UDP-alpha-D-glucuronate; the sequence is HTR.

The protein belongs to the glycosyltransferase 43 family. In terms of assembly, homodimer. Interacts with SAR1A. It depends on Mn(2+) as a cofactor. The soluble form derives from the membrane form by proteolytic processing. As to expression, mainly expressed in the brain.

It is found in the golgi apparatus membrane. It localises to the secreted. The protein resides in the endoplasmic reticulum membrane. It catalyses the reaction 3-O-(beta-D-galactosyl-(1-&gt;3)-beta-D-galactosyl-(1-&gt;4)-beta-D-xylosyl)-L-seryl-[protein] + UDP-alpha-D-glucuronate = 3-O-(beta-D-GlcA-(1-&gt;3)-beta-D-Gal-(1-&gt;3)-beta-D-Gal-(1-&gt;4)-beta-D-Xyl)-L-seryl-[protein] + UDP + H(+). Its pathway is protein modification; protein glycosylation. Involved in the biosynthesis of L2/HNK-1 carbohydrate epitope on glycoproteins. Can also play a role in glycosaminoglycan biosynthesis. Substrates include asialo-orosomucoid (ASOR), asialo-fetuin, and asialo-neural cell adhesion molecule. Requires sphingomyelin for activity: stearoyl-sphingomyelin was the most effective, followed by palmitoyl-sphingomyelin and lignoceroyl-sphingomyelin. Activity was demonstrated only for sphingomyelin with a saturated fatty acid and not for that with an unsaturated fatty acid, regardless of the length of the acyl group. The sequence is that of Galactosylgalactosylxylosylprotein 3-beta-glucuronosyltransferase 1 from Homo sapiens (Human).